The primary structure comprises 1184 residues: DNA-directed RNA polymerase subunit beta (1184 aa).

Residues 1160 to 1184 (DDDFTNQNDAFNIVQPENAATEKTE) form a disordered region.

The protein belongs to the RNA polymerase beta chain family. In terms of assembly, the RNAP catalytic core consists of 2 alpha, 1 beta, 1 beta' and 1 omega subunit. When a sigma factor is associated with the core the holoenzyme is formed, which can initiate transcription.

It catalyses the reaction RNA(n) + a ribonucleoside 5'-triphosphate = RNA(n+1) + diphosphate. DNA-dependent RNA polymerase catalyzes the transcription of DNA into RNA using the four ribonucleoside triphosphates as substrates. The sequence is that of DNA-directed RNA polymerase subunit beta from Listeria innocua serovar 6a (strain ATCC BAA-680 / CLIP 11262).